Consider the following 537-residue polypeptide: Eukaryotic translation initiation factor 3 subunit L (537 aa).

Residues 1–19 (MSRRVEFDLSTEDHSDRRR) are compositionally biased toward basic and acidic residues. The tract at residues 1–30 (MSRRVEFDLSTEDHSDRRRTNTFSSSADED) is disordered. A PCI domain is found at 299–487 (EATKMFVNCL…GPSSADDDEP (189 aa)).

Belongs to the eIF-3 subunit L family. As to quaternary structure, component of the eukaryotic translation initiation factor 3 (eIF-3) complex.

It is found in the cytoplasm. In terms of biological role, component of the eukaryotic translation initiation factor 3 (eIF-3) complex, which is involved in protein synthesis of a specialized repertoire of mRNAs and, together with other initiation factors, stimulates binding of mRNA and methionyl-tRNAi to the 40S ribosome. The eIF-3 complex specifically targets and initiates translation of a subset of mRNAs involved in cell proliferation. This chain is Eukaryotic translation initiation factor 3 subunit L, found in Caenorhabditis elegans.